Reading from the N-terminus, the 360-residue chain is Glucan endo-1,3-beta-glucosidase B (360 aa).

The first 25 residues, methionine 1 to alanine 25, serve as a signal peptide directing secretion. Position 26 is a pyrrolidone carboxylic acid (glutamine 26). Glutamate 120 serves as the catalytic Proton donor. The active-site Nucleophile is the glutamate 265. Residues valine 341–isoleucine 360 constitute a propeptide, removed in mature form. Asparagine 350 is a glycosylation site (N-linked (GlcNAc...) asparagine).

Belongs to the glycosyl hydrolase 17 family.

It is found in the vacuole. It carries out the reaction Hydrolysis of (1-&gt;3)-beta-D-glucosidic linkages in (1-&gt;3)-beta-D-glucans.. In terms of biological role, implicated in the defense of plants against pathogens. The sequence is that of Glucan endo-1,3-beta-glucosidase B from Solanum lycopersicum (Tomato).